The chain runs to 34 residues: Potassium channel toxin alpha-KTx 6.2 (34 aa).

Cystine bridges form between C3–C24, C9–C29, C13–C19, and C31–C34. C34 carries the post-translational modification Cysteine amide.

It belongs to the short scorpion toxin superfamily. Potassium channel inhibitor family. Alpha-KTx 06 subfamily. In terms of tissue distribution, expressed by the venom gland.

The protein resides in the secreted. Its function is as follows. Blocks voltage-gated potassium channels Kv1.2/KCNA2 (IC(50)=0.12-0.8 nM), KCa3.1/KCNN4 (IC(50)=1-2.2 nM), Shaker B (IC(50)=2.39-80 nM), Kv1.1/KCNA1 (IC(50)=37-45 or no activity, depending on the study), Kv1.3/KCNA3 (IC(50)=150-180 or no activity, depending on the study). In Scorpio palmatus (Israeli golden scorpion), this protein is Potassium channel toxin alpha-KTx 6.2.